A 102-amino-acid chain; its full sequence is Large ribosomal subunit protein bL21 (102 aa).

This sequence belongs to the bacterial ribosomal protein bL21 family. In terms of assembly, part of the 50S ribosomal subunit. Contacts protein L20.

This protein binds to 23S rRNA in the presence of protein L20. This is Large ribosomal subunit protein bL21 from Listeria monocytogenes serotype 4b (strain F2365).